The following is a 251-amino-acid chain: Imidazole glycerol phosphate synthase subunit HisF (251 aa).

Active-site residues include D11 and D130.

The protein belongs to the HisA/HisF family. In terms of assembly, heterodimer of HisH and HisF.

Its subcellular location is the cytoplasm. It carries out the reaction 5-[(5-phospho-1-deoxy-D-ribulos-1-ylimino)methylamino]-1-(5-phospho-beta-D-ribosyl)imidazole-4-carboxamide + L-glutamine = D-erythro-1-(imidazol-4-yl)glycerol 3-phosphate + 5-amino-1-(5-phospho-beta-D-ribosyl)imidazole-4-carboxamide + L-glutamate + H(+). It participates in amino-acid biosynthesis; L-histidine biosynthesis; L-histidine from 5-phospho-alpha-D-ribose 1-diphosphate: step 5/9. Functionally, IGPS catalyzes the conversion of PRFAR and glutamine to IGP, AICAR and glutamate. The HisF subunit catalyzes the cyclization activity that produces IGP and AICAR from PRFAR using the ammonia provided by the HisH subunit. In Bacteroides thetaiotaomicron (strain ATCC 29148 / DSM 2079 / JCM 5827 / CCUG 10774 / NCTC 10582 / VPI-5482 / E50), this protein is Imidazole glycerol phosphate synthase subunit HisF.